The sequence spans 153 residues: Gastric inhibitory polypeptide (153 aa).

The N-terminal stretch at 1 to 21 (MVATKTFALLLLSLFLAVGLG) is a signal peptide. 2 consecutive propeptides follow at residues 22-50 (EKKE…PRGP) and 95-153 (EARA…LRSR). A disordered region spans residues 102–125 (ASQANRKEEEAVEPQSSPAKNPSD).

This sequence belongs to the glucagon family.

The protein localises to the secreted. In terms of biological role, potent stimulator of insulin secretion and relatively poor inhibitor of gastric acid secretion. This Homo sapiens (Human) protein is Gastric inhibitory polypeptide (GIP).